The primary structure comprises 521 residues: GMP synthase [glutamine-hydrolyzing] (521 aa).

The 195-residue stretch at 9–203 folds into the Glutamine amidotransferase type-1 domain; it reads KILILDFGSQ…ISGICQCEKN (195 aa). Cysteine 86 acts as the Nucleophile in catalysis. Active-site residues include histidine 177 and glutamate 179. Residues 204-396 enclose the GMPS ATP-PPase domain; sequence WTTDNIIAKL…LSIPPHIIYR (193 aa). 231 to 237 is an ATP binding site; that stretch reads SGGVDSL.

In terms of assembly, homodimer.

The catalysed reaction is XMP + L-glutamine + ATP + H2O = GMP + L-glutamate + AMP + diphosphate + 2 H(+). It participates in purine metabolism; GMP biosynthesis; GMP from XMP (L-Gln route): step 1/1. In terms of biological role, catalyzes the synthesis of GMP from XMP. This Ruthia magnifica subsp. Calyptogena magnifica protein is GMP synthase [glutamine-hydrolyzing].